Here is a 357-residue protein sequence, read N- to C-terminus: MAAAELADTQLMLGVGLIEKDTNGEVLWVWCYPSTTATLRNLLLRKCCLTDENKLLHPFVFGQYRRTWFYITIIEVPDSSILKKVTHFSIVLTAKDFNPEKYAAFTRILCRMYLKHGSPVKMMESYIAVLTKGICQSEENGSFLSKDFDARKAYPAGSIKDIVSQFGMETVILHTALMLKKRIVVYHPKIEAVQEFTRTLPALVWHRQDWTILHSYVHLNADELEALQMCTGYVAGFVDLEVSNRPDLYDVFVNLAESEITIAPLAKEAMAMGKLHKEMGQLIVQSAEDPEKSESQVIQDIALKTREIFTNLAPFSEVSADGEKRVLNLEALKQKRFPPATENFLYHLAAAEQMLKI.

Residues 1-140 (MAAAELADTQ…TKGICQSEEN (140 aa)) enclose the uDENN domain. Residues 159-299 (IKDIVSQFGM…PEKSESQVIQ (141 aa)) enclose the cDENN domain. Residues 301-357 (IALKTREIFTNLAPFSEVSADGEKRVLNLEALKQKRFPPATENFLYHLAAAEQMLKI) form the dDENN domain.

The protein belongs to the DENND10 family.

The protein resides in the late endosome. May be a guanine nucleotide exchange factor (GEF). In Homo sapiens (Human), this protein is Putative DENN domain-containing protein 10 B.